The primary structure comprises 329 residues: Mitochondrial nuclease (329 aa).

The active-site Proton acceptor is the histidine 138. Asparagine 170 is a Mg(2+) binding site.

This sequence belongs to the DNA/RNA non-specific endonuclease family. As to quaternary structure, homodimer. Mn(2+) is required as a cofactor. Requires Mg(2+) as cofactor.

The protein resides in the mitochondrion inner membrane. In terms of biological role, this enzyme has both RNase and DNase activity. The chain is Mitochondrial nuclease (NUC1) from Saccharomyces cerevisiae (strain ATCC 204508 / S288c) (Baker's yeast).